The primary structure comprises 414 residues: Glutamyl-tRNA reductase (414 aa).

Residues Thr-47–Arg-50, Ser-106, Glu-111–Gln-113, and Gln-117 contribute to the substrate site. Cys-48 functions as the Nucleophile in the catalytic mechanism. Gly-185–Gly-190 contacts NADP(+).

The protein belongs to the glutamyl-tRNA reductase family. Homodimer.

It catalyses the reaction (S)-4-amino-5-oxopentanoate + tRNA(Glu) + NADP(+) = L-glutamyl-tRNA(Glu) + NADPH + H(+). It participates in porphyrin-containing compound metabolism; protoporphyrin-IX biosynthesis; 5-aminolevulinate from L-glutamyl-tRNA(Glu): step 1/2. Functionally, catalyzes the NADPH-dependent reduction of glutamyl-tRNA(Glu) to glutamate 1-semialdehyde (GSA). The chain is Glutamyl-tRNA reductase from Herpetosiphon aurantiacus (strain ATCC 23779 / DSM 785 / 114-95).